A 103-amino-acid chain; its full sequence is UPF0132 membrane protein AF_0105 (103 aa).

A run of 3 helical transmembrane segments spans residues valine 5–glutamate 25, alanine 35–isoleucine 55, and isoleucine 58–isoleucine 78.

This sequence belongs to the UPF0132 family.

It localises to the cell membrane. The polypeptide is UPF0132 membrane protein AF_0105 (Archaeoglobus fulgidus (strain ATCC 49558 / DSM 4304 / JCM 9628 / NBRC 100126 / VC-16)).